Here is a 281-residue protein sequence, read N- to C-terminus: Bifunctional protein FolD (281 aa).

Residues 165–167 (GRG), T192, and V233 contribute to the NADP(+) site.

This sequence belongs to the tetrahydrofolate dehydrogenase/cyclohydrolase family. As to quaternary structure, homodimer.

It catalyses the reaction (6R)-5,10-methylene-5,6,7,8-tetrahydrofolate + NADP(+) = (6R)-5,10-methenyltetrahydrofolate + NADPH. It carries out the reaction (6R)-5,10-methenyltetrahydrofolate + H2O = (6R)-10-formyltetrahydrofolate + H(+). The protein operates within one-carbon metabolism; tetrahydrofolate interconversion. In terms of biological role, catalyzes the oxidation of 5,10-methylenetetrahydrofolate to 5,10-methenyltetrahydrofolate and then the hydrolysis of 5,10-methenyltetrahydrofolate to 10-formyltetrahydrofolate. This is Bifunctional protein FolD from Mycobacterium bovis (strain BCG / Tokyo 172 / ATCC 35737 / TMC 1019).